The sequence spans 163 residues: Phosphopantetheine adenylyltransferase (163 aa).

Thr-10 is a binding site for substrate. Residues Thr-10–Phe-11 and His-18 each bind ATP. Substrate is bound by residues Lys-42, Leu-74, and Arg-88. ATP contacts are provided by residues Gly-89 to Arg-91, Glu-99, and Asn-124 to Thr-130.

The protein belongs to the bacterial CoaD family. In terms of assembly, homohexamer. Requires Mg(2+) as cofactor.

It is found in the cytoplasm. It catalyses the reaction (R)-4'-phosphopantetheine + ATP + H(+) = 3'-dephospho-CoA + diphosphate. It participates in cofactor biosynthesis; coenzyme A biosynthesis; CoA from (R)-pantothenate: step 4/5. Reversibly transfers an adenylyl group from ATP to 4'-phosphopantetheine, yielding dephospho-CoA (dPCoA) and pyrophosphate. The protein is Phosphopantetheine adenylyltransferase of Shewanella oneidensis (strain ATCC 700550 / JCM 31522 / CIP 106686 / LMG 19005 / NCIMB 14063 / MR-1).